Reading from the N-terminus, the 334-residue chain is Transaldolase (334 aa).

Residue Lys136 is the Schiff-base intermediate with substrate of the active site.

It belongs to the transaldolase family. Type 1 subfamily. As to quaternary structure, homodimer.

Its subcellular location is the cytoplasm. It catalyses the reaction D-sedoheptulose 7-phosphate + D-glyceraldehyde 3-phosphate = D-erythrose 4-phosphate + beta-D-fructose 6-phosphate. The protein operates within carbohydrate degradation; pentose phosphate pathway; D-glyceraldehyde 3-phosphate and beta-D-fructose 6-phosphate from D-ribose 5-phosphate and D-xylulose 5-phosphate (non-oxidative stage): step 2/3. Transaldolase is important for the balance of metabolites in the pentose-phosphate pathway. In Nostoc punctiforme (strain ATCC 29133 / PCC 73102), this protein is Transaldolase.